The primary structure comprises 634 residues: Chaperone protein DnaK (634 aa).

At Thr-198 the chain carries Phosphothreonine; by autocatalysis. Positions 599 to 634 (KQTQEGAEAASEAGEQSAGDEGVVDAEFEEVDEQNK) are disordered. Residues 602–619 (QEGAEAASEAGEQSAGDE) are compositionally biased toward low complexity. Acidic residues predominate over residues 620–634 (GVVDAEFEEVDEQNK).

The protein belongs to the heat shock protein 70 family.

Functionally, acts as a chaperone. The polypeptide is Chaperone protein DnaK (Syntrophotalea carbinolica (strain DSM 2380 / NBRC 103641 / GraBd1) (Pelobacter carbinolicus)).